A 592-amino-acid chain; its full sequence is Cyclin-dependent kinase-like 3 (592 aa).

The Protein kinase domain maps to 4–286 (YETLGKVGEG…SSDLLHHEYF (283 aa)). ATP contacts are provided by residues 10 to 18 (VGEGSYGTV) and lysine 33. The short motif at 44-50 (NKIAMRE) is the [NKR]KIAxRE element. Catalysis depends on aspartate 125, which acts as the Proton acceptor. Phosphothreonine is present on threonine 158. Tyrosine 160 bears the Phosphotyrosine mark. The segment covering 368-379 (GDISEPKKKEYE) has biased composition (basic and acidic residues). Disordered regions lie at residues 368 to 390 (GDIS…ANEN) and 459 to 485 (RAKK…PGPI). Over residues 466–477 (SSQSIGQVMPNS) the composition is skewed to polar residues.

The protein belongs to the protein kinase superfamily. CMGC Ser/Thr protein kinase family. CDC2/CDKX subfamily.

The protein localises to the cytoplasm. The enzyme catalyses L-seryl-[protein] + ATP = O-phospho-L-seryl-[protein] + ADP + H(+). It carries out the reaction L-threonyl-[protein] + ATP = O-phospho-L-threonyl-[protein] + ADP + H(+). This chain is Cyclin-dependent kinase-like 3, found in Homo sapiens (Human).